Reading from the N-terminus, the 250-residue chain is AA9 family lytic polysaccharide monooxygenase AA17 (250 aa).

The first 21 residues, 1-21 (MAMSKIVSLTGLLASASLVAG), serve as a signal peptide directing secretion. Histidine 22 and histidine 107 together coordinate Cu(2+). Cystine bridges form between cysteine 77–cysteine 199 and cysteine 118–cysteine 122. Asparagine 159 carries an N-linked (GlcNAc...) asparagine glycan. O2 is bound by residues histidine 185 and glutamine 194. A Cu(2+)-binding site is contributed by tyrosine 196.

The protein belongs to the polysaccharide monooxygenase AA9 family. Requires Cu(2+) as cofactor.

The protein localises to the secreted. Its function is as follows. Lytic polysaccharide monooxygenase (LPMO) that exhibits oxidative cleavage beta-O-4 linkage of lignin resulting in the formation of aromatic compound guaiacol. Catalysis by LPMOs requires the reduction of the active-site copper from Cu(II) to Cu(I) by a reducing agent and H(2)O(2) or O(2) as a cosubstrate. Does not use cellulose, cello-oligosaccharides, xyloglucan, xylan, chitin nor starch as substrates. Able to depolymerize the lignin dimer guaicyl glycerol beta-guaicyl ether (GGE). This Aspergillus oryzae (strain ATCC 42149 / RIB 40) (Yellow koji mold) protein is AA9 family lytic polysaccharide monooxygenase AA17.